A 226-amino-acid polypeptide reads, in one-letter code: MSDPISFKVILVGDGATGKTTFVTRHITGEFRKQYISTIGVEIRQLPFYVAGQSCPNGREVLLNVHDTAGQEKFGGLRDGYYVDSDACLLFFDVTNRVTYKNVESWYRDVFRICPTRRDASTGEEKPLAIVLVGNKCDVKDREIRTQTVKFHRSKNIPYVEISAKDNFNYELPILSILRTLLNDPTIQFSQAPALLPADIGMDAATREQINKDLEAVNNVPLPDDD.

In terms of domain architecture, Small GTPase Ran-type spans 3–184 (DPISFKVILV…LSILRTLLND (182 aa)). 14-21 (DGATGKTT) serves as a coordination point for GTP. A switch-I region spans residues 33-41 (KQYISTIGV). GTP-binding positions include glycine 70, 135-138 (NKCD), and 163-165 (SAK). The switch-II stretch occupies residues 70–86 (GQEKFGGLRDGYYVDSD).

Belongs to the small GTPase superfamily. Ran family. As to quaternary structure, found in a nuclear export complex with RanGTP, exportin and pre-miRNA.

It localises to the nucleus. Its function is as follows. GTP-binding protein involved in nucleocytoplasmic transport. Required for the import of protein into the nucleus and also for RNA export. Involved in chromatin condensation and control of cell cycle. This Giardia intestinalis (Giardia lamblia) protein is GTP-binding nuclear protein Ran.